Here is a 411-residue protein sequence, read N- to C-terminus: Carbamoyl phosphate synthase arginine-specific small chain (411 aa).

Positions 50, 232, and 234 each coordinate L-glutamine. The region spanning 185-376 is the Glutamine amidotransferase type-1 domain; it reads NVALIDCGVK…FDNIEKYQLQ (192 aa). The active-site Nucleophile is the Cys-264. Positions 265, 268, 306, 308, and 309 each coordinate L-glutamine. Catalysis depends on residues His-349 and Glu-351.

The protein belongs to the CarA family. In terms of assembly, heterodimer composed of 2 chains; the small (or glutamine) chain promotes the hydrolysis of glutamine to ammonia, which is used by the large (or ammonia) chain to synthesize carbamoyl phosphate.

Its subcellular location is the cytoplasm. It catalyses the reaction hydrogencarbonate + L-glutamine + 2 ATP + H2O = carbamoyl phosphate + L-glutamate + 2 ADP + phosphate + 2 H(+). The enzyme catalyses L-glutamine + H2O = L-glutamate + NH4(+). It functions in the pathway amino-acid biosynthesis; L-arginine biosynthesis; carbamoyl phosphate from bicarbonate: step 1/1. Its function is as follows. Small subunit of the arginine-specific carbamoyl phosphate synthase (CPSase). CPSase catalyzes the formation of carbamoyl phosphate from the ammonia moiety of glutamine, carbonate, and phosphate donated by ATP, constituting the first step of 2 biosynthetic pathways, one leading to arginine and/or urea and the other to pyrimidine nucleotides. The small subunit (glutamine amidotransferase) binds and cleaves glutamine to supply the large subunit with the substrate ammonia. The chain is Carbamoyl phosphate synthase arginine-specific small chain (CPA1) from Saccharomyces cerevisiae (strain ATCC 204508 / S288c) (Baker's yeast).